We begin with the raw amino-acid sequence, 1136 residues long: Probable LRR receptor-like serine/threonine-protein kinase At4g36180 (1136 aa).

Residues 1 to 22 (MAMDISLFFIFLVIYAPLVSYA) form the signal peptide. The Extracellular segment spans residues 23-751 (DESQAEIDAL…TAEGKKKKRK (729 aa)). LRR repeat units follow at residues 93 to 115 (MLRK…LAYC), 117 to 139 (RLLS…MRNL), 141 to 162 (SLEV…GLPS), 163 to 186 (SLQF…ANLT), 187 to 210 (QLQL…GNLQ), 211 to 233 (SLQY…ISNC), 235 to 256 (SLVH…AYGA), and 259 to 280 (KLEV…SLFC). 2 N-linked (GlcNAc...) asparagine glycosylation sites follow: N105 and N138. Residues N184, N192, and N232 are each glycosylated (N-linked (GlcNAc...) asparagine). Residues N269 and N281 are each glycosylated (N-linked (GlcNAc...) asparagine). LRR repeat units follow at residues 283–304 (SLTI…ETTA), 309–330 (GLQV…WLTN), 333–355 (SLKN…IGNL), 357–379 (RLEE…IKQC), 381–403 (SLDV…LGYM), 405–426 (ALKV…SMVN), 429–452 (QLER…MALT), 453–479 (SLSE…SNLS), 480–500 (FLNL…GNLF), 501–524 (KLTA…SGLP), 525–546 (NVQV…GFSS), 549–571 (SLRY…FGFL), 573–595 (LLVS…IGNC), 597–620 (ALEV…SRLP), 621–643 (RLKV…ISQS), 645–666 (SLNS…SFSG), 669–691 (NLTK…LALI), and 694–716 (NLVY…LGSR). N365 carries an N-linked (GlcNAc...) asparagine glycan. N441, N474, N477, N482, N511, N535, N554, and N594 each carry an N-linked (GlcNAc...) asparagine glycan. Residue N631 is glycosylated (N-linked (GlcNAc...) asparagine). 4 N-linked (GlcNAc...) asparagine glycosylation sites follow: N669, N679, N699, and N719. The chain crosses the membrane as a helical span at residues 752–772 (MILMIVMAAIGAFLLSLFCCF). Topologically, residues 773-1136 (YVYTLLKWRK…ADPTSQPSPA (364 aa)) are cytoplasmic. The tract at residues 786 to 819 (QQSTTGEKKRSPGRTSAGSRVRSSTSRSSTENGE) is disordered. Over residues 799–815 (RTSAGSRVRSSTSRSST) the composition is skewed to low complexity. A phosphothreonine mark is found at T830 and T838. The region spanning 841-1123 (FDEENVLSRT…LEGCRVGPDV (283 aa)) is the Protein kinase domain. A phosphotyrosine mark is found at Y915 and Y1010.

This sequence belongs to the protein kinase superfamily. Ser/Thr protein kinase family.

The protein resides in the cell membrane. It carries out the reaction L-seryl-[protein] + ATP = O-phospho-L-seryl-[protein] + ADP + H(+). It catalyses the reaction L-threonyl-[protein] + ATP = O-phospho-L-threonyl-[protein] + ADP + H(+). The protein is Probable LRR receptor-like serine/threonine-protein kinase At4g36180 of Arabidopsis thaliana (Mouse-ear cress).